We begin with the raw amino-acid sequence, 729 residues long: Phosphoribosylformylglycinamidine synthase subunit PurL (729 aa).

Histidine 54 is a catalytic residue. ATP is bound by residues tyrosine 57 and lysine 96. A Mg(2+)-binding site is contributed by glutamate 98. Substrate-binding positions include 99–102 (SHNH) and arginine 121. The Proton acceptor role is filled by histidine 100. Aspartate 122 provides a ligand contact to Mg(2+). A substrate-binding site is contributed by glutamine 245. Position 273 (aspartate 273) interacts with Mg(2+). 317 to 319 (ETQ) contacts substrate. Positions 495 and 532 each coordinate ATP. Asparagine 533 is a binding site for Mg(2+). Serine 535 contacts substrate.

Belongs to the FGAMS family. Monomer. Part of the FGAM synthase complex composed of 1 PurL, 1 PurQ and 2 PurS subunits.

It is found in the cytoplasm. The catalysed reaction is N(2)-formyl-N(1)-(5-phospho-beta-D-ribosyl)glycinamide + L-glutamine + ATP + H2O = 2-formamido-N(1)-(5-O-phospho-beta-D-ribosyl)acetamidine + L-glutamate + ADP + phosphate + H(+). The protein operates within purine metabolism; IMP biosynthesis via de novo pathway; 5-amino-1-(5-phospho-D-ribosyl)imidazole from N(2)-formyl-N(1)-(5-phospho-D-ribosyl)glycinamide: step 1/2. In terms of biological role, part of the phosphoribosylformylglycinamidine synthase complex involved in the purines biosynthetic pathway. Catalyzes the ATP-dependent conversion of formylglycinamide ribonucleotide (FGAR) and glutamine to yield formylglycinamidine ribonucleotide (FGAM) and glutamate. The FGAM synthase complex is composed of three subunits. PurQ produces an ammonia molecule by converting glutamine to glutamate. PurL transfers the ammonia molecule to FGAR to form FGAM in an ATP-dependent manner. PurS interacts with PurQ and PurL and is thought to assist in the transfer of the ammonia molecule from PurQ to PurL. The sequence is that of Phosphoribosylformylglycinamidine synthase subunit PurL from Staphylococcus haemolyticus (strain JCSC1435).